A 103-amino-acid chain; its full sequence is Cytotoxin-like protein TA-BMBGT3 (103 aa).

Residues 1–21 (MKTLLLTLVVVTIICLDLGYT) form the signal peptide. 5 cysteine pairs are disulfide-bonded: C24–C45, C27–C37, C38–C72, C76–C90, and C91–C96.

This sequence belongs to the three-finger toxin family. Ancestral subfamily. Orphan group XVII sub-subfamily. Expressed by the venom gland.

It is found in the secreted. This Bungarus multicinctus (Many-banded krait) protein is Cytotoxin-like protein TA-BMBGT3.